The following is a 514-amino-acid chain: Peptide chain release factor 3 (514 aa).

Residues 8 to 268 enclose the tr-type G domain; it reads KKRRTFAIIS…TFLEFAPEPH (261 aa). Residues 17 to 24, 85 to 89, and 139 to 142 contribute to the GTP site; these read SHPDAGKT, DTPGH, and NKLD.

Belongs to the TRAFAC class translation factor GTPase superfamily. Classic translation factor GTPase family. PrfC subfamily.

The protein localises to the cytoplasm. In terms of biological role, increases the formation of ribosomal termination complexes and stimulates activities of RF-1 and RF-2. It binds guanine nucleotides and has strong preference for UGA stop codons. It may interact directly with the ribosome. The stimulation of RF-1 and RF-2 is significantly reduced by GTP and GDP, but not by GMP. The sequence is that of Peptide chain release factor 3 from Streptococcus pyogenes serotype M49 (strain NZ131).